Here is a 332-residue protein sequence, read N- to C-terminus: Glyceraldehyde-3-phosphate dehydrogenase (332 aa).

NAD(+)-binding positions include arginine 10–isoleucine 11, aspartate 32, and methionine 77. D-glyceraldehyde 3-phosphate-binding positions include serine 148–threonine 150, threonine 179, threonine 208–glycine 209, and arginine 231. The active-site Nucleophile is the cysteine 149. NAD(+) is bound at residue asparagine 313.

The protein belongs to the glyceraldehyde-3-phosphate dehydrogenase family. In terms of assembly, homotetramer.

Its subcellular location is the cytoplasm. It catalyses the reaction D-glyceraldehyde 3-phosphate + phosphate + NAD(+) = (2R)-3-phospho-glyceroyl phosphate + NADH + H(+). Its pathway is carbohydrate degradation; glycolysis; pyruvate from D-glyceraldehyde 3-phosphate: step 1/5. The chain is Glyceraldehyde-3-phosphate dehydrogenase (GPDA) from Phytophthora infestans (Potato late blight agent).